A 122-amino-acid polypeptide reads, in one-letter code: Heat-labile enterotoxin IIB, B chain (122 aa).

Positions 1–23 (MSFKKIIKAFVIMAALVSVQAHA) are cleaved as a signal peptide. Cys-33 and Cys-104 are disulfide-bonded.

In terms of assembly, heterohexamer of one A chain and of five B chains.

In terms of biological role, the biological activity of the toxin is produced by the A chain, which activates intracellular adenyl cyclase. The chain is Heat-labile enterotoxin IIB, B chain from Escherichia coli.